Consider the following 71-residue polypeptide: Long neurotoxin 1 (71 aa).

5 disulfide bridges follow: cysteine 3-cysteine 20, cysteine 14-cysteine 41, cysteine 26-cysteine 30, cysteine 45-cysteine 56, and cysteine 57-cysteine 62.

Belongs to the three-finger toxin family. Long-chain subfamily. Type II alpha-neurotoxin sub-subfamily. Expressed by the venom gland.

Its subcellular location is the secreted. Functionally, binds with high affinity to muscular (alpha-1/CHRNA1) and neuronal (alpha-7/CHRNA7) nicotinic acetylcholine receptor (nAChR) and inhibits acetylcholine from binding to the receptor, thereby impairing neuromuscular and neuronal transmission. The polypeptide is Long neurotoxin 1 (Naja naja (Indian cobra)).